The following is a 590-amino-acid chain: MNIYRTHLCNELREEHINQEVILSGWVYRKRDHGKIIFVDLRDHYGITQLVFNEADNEIFQLISYLKLESVITIKGTVVARDSSTINTTVSTGLIEVVVNHVTIESEANLLPMNIASTQEYPEDIRFKYRFLDLRRDKVKHNIILRSKVIAELRKSMENMGFIEIQTPILTSSSPEGARDYLVPSRIHHGKFYALPQAPQLFKQILMVSGFDKYFQIAPCFRDEDARADRSPGEFYQLDMEMSFVTQEDVFNVIEPVLLNIFSKFSSKTIHKEFPRISYHNAMLYYGSDKPDLRNPLIIQDVTEIFRDSQFNIFNSNIKKGMVVRAIPAPKTANNPRSFFDNKIEFAKTLGAQGLGYITFNDDSSAKGPIAKFLDEERLNKIKSICNLQTGDSVFFVSETEDKAAEFAGEIRTILGTELNLIEPDTFRFCWVVDFPYFKYDKKEKSIGFFHNPFSMPQGGLEALNNQDPLSILAYQYDIVCNGIEISSGAIRNHKLDIMYKAFSIAGYTQEMVDKKFNSLTRAFKFGAPPHGGIAPGIDRMVMLLADATNIREVICFPLNQSGEDLLMGAPSEIDTEHLKLLSLNITKKS.

Residue glutamate 176 coordinates L-aspartate. The segment at 200 to 203 is aspartate; it reads QLFK. Positions 222 and 451 each coordinate L-aspartate. Residue 222–224 participates in ATP binding; that stretch reads RDE. Glutamate 485 is a binding site for ATP. Residue arginine 492 coordinates L-aspartate. Residue 537–540 participates in ATP binding; that stretch reads GIDR.

It belongs to the class-II aminoacyl-tRNA synthetase family. Type 1 subfamily. Homodimer.

The protein resides in the cytoplasm. It carries out the reaction tRNA(Asx) + L-aspartate + ATP = L-aspartyl-tRNA(Asx) + AMP + diphosphate. In terms of biological role, aspartyl-tRNA synthetase with relaxed tRNA specificity since it is able to aspartylate not only its cognate tRNA(Asp) but also tRNA(Asn). Reaction proceeds in two steps: L-aspartate is first activated by ATP to form Asp-AMP and then transferred to the acceptor end of tRNA(Asp/Asn). This is Aspartate--tRNA(Asp/Asn) ligase from Ehrlichia canis (strain Jake).